Here is a 1397-residue protein sequence, read N- to C-terminus: DNA-directed RNA polymerase subunit beta' (1397 aa).

4 residues coordinate Zn(2+): cysteine 71, cysteine 73, cysteine 86, and cysteine 89. 3 residues coordinate Mg(2+): aspartate 462, aspartate 464, and aspartate 466. 4 residues coordinate Zn(2+): cysteine 811, cysteine 885, cysteine 892, and cysteine 895. Residues 1368-1397 form a disordered region; sequence QNRDDKILEDQGGATPTASTEIKEPAEGAA. Basic and acidic residues predominate over residues 1388-1397; that stretch reads EIKEPAEGAA.

Belongs to the RNA polymerase beta' chain family. The RNAP catalytic core consists of 2 alpha, 1 beta, 1 beta' and 1 omega subunit. When a sigma factor is associated with the core the holoenzyme is formed, which can initiate transcription. Requires Mg(2+) as cofactor. Zn(2+) serves as cofactor.

It catalyses the reaction RNA(n) + a ribonucleoside 5'-triphosphate = RNA(n+1) + diphosphate. Functionally, DNA-dependent RNA polymerase catalyzes the transcription of DNA into RNA using the four ribonucleoside triphosphates as substrates. This chain is DNA-directed RNA polymerase subunit beta', found in Parvibaculum lavamentivorans (strain DS-1 / DSM 13023 / NCIMB 13966).